We begin with the raw amino-acid sequence, 141 residues long: Hemoglobin subunit alpha-1 (141 aa).

Residues 1–141 form the Globin domain; that stretch reads VLSPEDKNNV…VSTVLTSKYR (141 aa). His58 serves as a coordination point for O2. His87 is a binding site for heme b.

The protein belongs to the globin family. Heterotetramer of two alpha chains and two beta chains. As to expression, red blood cells.

Functionally, involved in oxygen transport from the lung to the various peripheral tissues. This Tadarida brasiliensis (Brazilian free-tailed bat) protein is Hemoglobin subunit alpha-1.